Reading from the N-terminus, the 504-residue chain is Maturase K (504 aa).

It belongs to the intron maturase 2 family. MatK subfamily.

The protein resides in the plastid. The protein localises to the chloroplast. Functionally, usually encoded in the trnK tRNA gene intron. Probably assists in splicing its own and other chloroplast group II introns. This chain is Maturase K, found in Eichhornia crassipes (Water hyacinth).